Consider the following 291-residue polypeptide: Ribosomal RNA small subunit methyltransferase A (291 aa).

Positions 33, 35, 60, 81, 111, and 129 each coordinate S-adenosyl-L-methionine.

It belongs to the class I-like SAM-binding methyltransferase superfamily. rRNA adenine N(6)-methyltransferase family. RsmA subfamily.

It is found in the cytoplasm. The catalysed reaction is adenosine(1518)/adenosine(1519) in 16S rRNA + 4 S-adenosyl-L-methionine = N(6)-dimethyladenosine(1518)/N(6)-dimethyladenosine(1519) in 16S rRNA + 4 S-adenosyl-L-homocysteine + 4 H(+). In terms of biological role, specifically dimethylates two adjacent adenosines (A1518 and A1519) in the loop of a conserved hairpin near the 3'-end of 16S rRNA in the 30S particle. May play a critical role in biogenesis of 30S subunits. In Streptomyces griseus subsp. griseus (strain JCM 4626 / CBS 651.72 / NBRC 13350 / KCC S-0626 / ISP 5235), this protein is Ribosomal RNA small subunit methyltransferase A.